Reading from the N-terminus, the 354-residue chain is tRNA N6-adenosine threonylcarbamoyltransferase (354 aa).

3 residues coordinate a divalent metal cation: H121, H125, and Y142. Residues 142-146 (YVSGG), D174, G189, E193, and N285 each bind substrate. D313 is an a divalent metal cation binding site.

This sequence belongs to the KAE1 / TsaD family. In terms of assembly, component of the EKC/KEOPS complex composed of at least bud32, cgi121, gon7, kae1 and pcc1; the whole complex dimerizes. A divalent metal cation is required as a cofactor.

Its subcellular location is the cytoplasm. The protein localises to the nucleus. The enzyme catalyses L-threonylcarbamoyladenylate + adenosine(37) in tRNA = N(6)-L-threonylcarbamoyladenosine(37) in tRNA + AMP + H(+). Functionally, component of the EKC/KEOPS complex that is required for the formation of a threonylcarbamoyl group on adenosine at position 37 (t(6)A37) in tRNAs that read codons beginning with adenine. The complex is probably involved in the transfer of the threonylcarbamoyl moiety of threonylcarbamoyl-AMP (TC-AMP) to the N6 group of A37. Kae1 likely plays a direct catalytic role in this reaction, but requires other protein(s) of the complex to fulfill this activity. The EKC/KEOPS complex also promotes both telomere uncapping and telomere elongation. The complex is required for efficient recruitment of transcriptional coactivators. The sequence is that of tRNA N6-adenosine threonylcarbamoyltransferase (gpe-1) from Neurospora crassa (strain ATCC 24698 / 74-OR23-1A / CBS 708.71 / DSM 1257 / FGSC 987).